Consider the following 97-residue polypeptide: ESAT-6-like protein EsxG (97 aa).

S2 is subject to N-acetylserine.

Belongs to the WXG100 family. CFP-10 subfamily. In terms of assembly, forms a tight 1:1 complex with EsxH.

The protein resides in the secreted. EsxG, in complex with EsxH, disrupts ESCRT function and impairs host phagosome maturation, thereby promoting intracellular bacterial growth. The complex acts by interacting, via EsxH, with the host hepatocyte growth factor-regulated tyrosine kinase substrate (HGS/HRS), a component of the ESCRT machinery. EsxG stabilizes EsxH in the host cytosol. This Mycobacterium tuberculosis (strain ATCC 25618 / H37Rv) protein is ESAT-6-like protein EsxG.